The sequence spans 507 residues: Histidine ammonia-lyase (507 aa).

Positions 142 to 144 form a cross-link, 5-imidazolinone (Ala-Gly); sequence ASG. Residue Ser143 is modified to 2,3-didehydroalanine (Ser).

The protein belongs to the PAL/histidase family. Contains an active site 4-methylidene-imidazol-5-one (MIO), which is formed autocatalytically by cyclization and dehydration of residues Ala-Ser-Gly.

It is found in the cytoplasm. It carries out the reaction L-histidine = trans-urocanate + NH4(+). It functions in the pathway amino-acid degradation; L-histidine degradation into L-glutamate; N-formimidoyl-L-glutamate from L-histidine: step 1/3. This is Histidine ammonia-lyase from Symbiobacterium thermophilum (strain DSM 24528 / JCM 14929 / IAM 14863 / T).